The following is a 581-amino-acid chain: Probable bifunctional SAT/APS kinase 2 (581 aa).

Residues 1–200 (MSGFVVWFTG…AAGGARGLIA (200 aa)) are adenylsulfate kinase. Residue 10-17 (GLSGAGKS) coordinates ATP. Catalysis depends on Ser84, which acts as the Phosphoserine intermediate. A sulfate adenylyltransferase region spans residues 201-581 (PHGGELVNRW…ILIESMRSSS (381 aa)).

This sequence in the N-terminal section; belongs to the APS kinase family. It in the C-terminal section; belongs to the sulfate adenylyltransferase family.

It catalyses the reaction sulfate + ATP + H(+) = adenosine 5'-phosphosulfate + diphosphate. The catalysed reaction is adenosine 5'-phosphosulfate + ATP = 3'-phosphoadenylyl sulfate + ADP + H(+). The protein operates within sulfur metabolism; hydrogen sulfide biosynthesis; sulfite from sulfate: step 1/3. It participates in sulfur metabolism; hydrogen sulfide biosynthesis; sulfite from sulfate: step 2/3. This is Probable bifunctional SAT/APS kinase 2 (sat2/cysC2) from Sorangium cellulosum (strain So ce56) (Polyangium cellulosum (strain So ce56)).